The following is a 34-amino-acid chain: Cytochrome c oxidase subunit 6B (34 aa).

This sequence belongs to the cytochrome c oxidase subunit 6B family. As to quaternary structure, component of the cytochrome c oxidase (complex IV, CIV), a multisubunit enzyme composed of 14 subunits. The complex is composed of a catalytic core of 3 subunits MT-CO1, MT-CO2 and MT-CO3, encoded in the mitochondrial DNA, and 11 supernumerary subunits COX4I, COX5A, COX5B, COX6A, COX6B, COX6C, COX7A, COX7B, COX7C, COX8 and NDUFA4, which are encoded in the nuclear genome. The complex exists as a monomer or a dimer and forms supercomplexes (SCs) in the inner mitochondrial membrane with NADH-ubiquinone oxidoreductase (complex I, CI) and ubiquinol-cytochrome c oxidoreductase (cytochrome b-c1 complex, complex III, CIII), resulting in different assemblies (supercomplex SCI(1)III(2)IV(1) and megacomplex MCI(2)III(2)IV(2)). The N-terminus is blocked.

The protein resides in the mitochondrion inner membrane. Its pathway is energy metabolism; oxidative phosphorylation. In terms of biological role, component of the cytochrome c oxidase, the last enzyme in the mitochondrial electron transport chain which drives oxidative phosphorylation. The respiratory chain contains 3 multisubunit complexes succinate dehydrogenase (complex II, CII), ubiquinol-cytochrome c oxidoreductase (cytochrome b-c1 complex, complex III, CIII) and cytochrome c oxidase (complex IV, CIV), that cooperate to transfer electrons derived from NADH and succinate to molecular oxygen, creating an electrochemical gradient over the inner membrane that drives transmembrane transport and the ATP synthase. Cytochrome c oxidase is the component of the respiratory chain that catalyzes the reduction of oxygen to water. Electrons originating from reduced cytochrome c in the intermembrane space (IMS) are transferred via the dinuclear copper A center (CU(A)) of subunit 2 and heme A of subunit 1 to the active site in subunit 1, a binuclear center (BNC) formed by heme A3 and copper B (CU(B)). The BNC reduces molecular oxygen to 2 water molecules using 4 electrons from cytochrome c in the IMS and 4 protons from the mitochondrial matrix. The chain is Cytochrome c oxidase subunit 6B from Thunnus obesus (Bigeye tuna).